The sequence spans 436 residues: 3-ketoacyl-CoA thiolase (436 aa).

The Acyl-thioester intermediate role is filled by cysteine 99. Catalysis depends on proton acceptor residues histidine 392 and cysteine 422.

This sequence belongs to the thiolase-like superfamily. Thiolase family. In terms of assembly, heterotetramer of two alpha chains (FadJ) and two beta chains (FadI).

The protein resides in the cytoplasm. It carries out the reaction an acyl-CoA + acetyl-CoA = a 3-oxoacyl-CoA + CoA. It functions in the pathway lipid metabolism; fatty acid beta-oxidation. Its function is as follows. Catalyzes the final step of fatty acid oxidation in which acetyl-CoA is released and the CoA ester of a fatty acid two carbons shorter is formed. This Shewanella baltica (strain OS155 / ATCC BAA-1091) protein is 3-ketoacyl-CoA thiolase.